Reading from the N-terminus, the 139-residue chain is Protein archease (139 aa).

3 residues coordinate Ca(2+): D12, D138, and I139.

It belongs to the archease family.

In terms of biological role, activates the tRNA-splicing ligase complex by facilitating the enzymatic turnover of catalytic subunit RtcB. Acts by promoting the guanylylation of RtcB, a key intermediate step in tRNA ligation. Can also alter the NTP specificity of RtcB such that ATP, dGTP or ITP is used efficiently. The sequence is that of Protein archease from Sulfurisphaera tokodaii (strain DSM 16993 / JCM 10545 / NBRC 100140 / 7) (Sulfolobus tokodaii).